We begin with the raw amino-acid sequence, 272 residues long: Shikimate dehydrogenase (NADP(+)) (272 aa).

Residues 19–21 (SLS) and Thr66 contribute to the shikimate site. The Proton acceptor role is filled by Lys70. NADP(+) is bound at residue Glu82. Asn91 and Asp106 together coordinate shikimate. NADP(+) contacts are provided by residues 129–133 (GAGGA), 151–156 (NRTPEK), and Ile214. Residue Tyr216 participates in shikimate binding. Gly237 provides a ligand contact to NADP(+).

It belongs to the shikimate dehydrogenase family. As to quaternary structure, homodimer.

It carries out the reaction shikimate + NADP(+) = 3-dehydroshikimate + NADPH + H(+). The protein operates within metabolic intermediate biosynthesis; chorismate biosynthesis; chorismate from D-erythrose 4-phosphate and phosphoenolpyruvate: step 4/7. Its function is as follows. Involved in the biosynthesis of the chorismate, which leads to the biosynthesis of aromatic amino acids. Catalyzes the reversible NADPH linked reduction of 3-dehydroshikimate (DHSA) to yield shikimate (SA). The sequence is that of Shikimate dehydrogenase (NADP(+)) from Thermococcus kodakarensis (strain ATCC BAA-918 / JCM 12380 / KOD1) (Pyrococcus kodakaraensis (strain KOD1)).